Consider the following 336-residue polypeptide: Phosphate acyltransferase (336 aa).

It belongs to the PlsX family. Homodimer. Probably interacts with PlsY.

It localises to the cytoplasm. The enzyme catalyses a fatty acyl-[ACP] + phosphate = an acyl phosphate + holo-[ACP]. Its pathway is lipid metabolism; phospholipid metabolism. In terms of biological role, catalyzes the reversible formation of acyl-phosphate (acyl-PO(4)) from acyl-[acyl-carrier-protein] (acyl-ACP). This enzyme utilizes acyl-ACP as fatty acyl donor, but not acyl-CoA. The polypeptide is Phosphate acyltransferase (Pseudomonas aeruginosa (strain UCBPP-PA14)).